A 415-amino-acid chain; its full sequence is Gamma-glutamyl phosphate reductase (415 aa).

This sequence belongs to the gamma-glutamyl phosphate reductase family.

The protein localises to the cytoplasm. It catalyses the reaction L-glutamate 5-semialdehyde + phosphate + NADP(+) = L-glutamyl 5-phosphate + NADPH + H(+). Its pathway is amino-acid biosynthesis; L-proline biosynthesis; L-glutamate 5-semialdehyde from L-glutamate: step 2/2. Functionally, catalyzes the NADPH-dependent reduction of L-glutamate 5-phosphate into L-glutamate 5-semialdehyde and phosphate. The product spontaneously undergoes cyclization to form 1-pyrroline-5-carboxylate. The protein is Gamma-glutamyl phosphate reductase of Oceanobacillus iheyensis (strain DSM 14371 / CIP 107618 / JCM 11309 / KCTC 3954 / HTE831).